Here is a 209-residue protein sequence, read N- to C-terminus: Ubiquitin-conjugating enzyme E2 S (209 aa).

The UBC core domain maps to 14 to 160 (QTIRQVMREL…ARMMTEIHAQ (147 aa)). Cys-98 acts as the Glycyl thioester intermediate in catalysis. The tract at residues 165–209 (GVGATGDAKDDGGPSTKKHAGLDKKLQDKKKEKLLKEKKRMLKRL) is disordered. Basic and acidic residues predominate over residues 184 to 199 (AGLDKKLQDKKKEKLL). Residues 200–209 (KEKKRMLKRL) show a composition bias toward basic residues.

The protein belongs to the ubiquitin-conjugating enzyme family.

The enzyme catalyses S-ubiquitinyl-[E1 ubiquitin-activating enzyme]-L-cysteine + [E2 ubiquitin-conjugating enzyme]-L-cysteine = [E1 ubiquitin-activating enzyme]-L-cysteine + S-ubiquitinyl-[E2 ubiquitin-conjugating enzyme]-L-cysteine.. It functions in the pathway protein modification; protein ubiquitination. Its function is as follows. Catalyzes the covalent attachment of ubiquitin to other proteins. Acts as an essential factor of the anaphase promoting complex/cyclosome (APC/C), a cell cycle-regulated ubiquitin ligase that controls progression through mitosis. Acts by specifically elongating polyubiquitin chains initiated by the E2 enzyme vih/UbcH10 on APC/C substrates, enhancing the degradation of APC/C substrates by the proteasome and promoting mitotic exit. The chain is Ubiquitin-conjugating enzyme E2 S from Drosophila simulans (Fruit fly).